A 203-amino-acid chain; its full sequence is Molybdenum cofactor guanylyltransferase (203 aa).

GTP-binding positions include 12–14 (LAG), K25, N53, D71, and D101. Residue D101 coordinates Mg(2+).

It belongs to the MobA family. Monomer. Mg(2+) is required as a cofactor.

It is found in the cytoplasm. It carries out the reaction Mo-molybdopterin + GTP + H(+) = Mo-molybdopterin guanine dinucleotide + diphosphate. Transfers a GMP moiety from GTP to Mo-molybdopterin (Mo-MPT) cofactor (Moco or molybdenum cofactor) to form Mo-molybdopterin guanine dinucleotide (Mo-MGD) cofactor. The chain is Molybdenum cofactor guanylyltransferase from Cupriavidus metallidurans (strain ATCC 43123 / DSM 2839 / NBRC 102507 / CH34) (Ralstonia metallidurans).